The sequence spans 549 residues: Thermosome subunit (549 aa).

Over residues 528-538 (EKEKEGEKGGG) the composition is skewed to basic and acidic residues. Positions 528–549 (EKEKEGEKGGGSEEFSGSSDLD) are disordered. Positions 540–549 (EEFSGSSDLD) are enriched in low complexity.

The protein belongs to the TCP-1 chaperonin family. Forms an oligomeric complex of eight-membered rings.

Functionally, molecular chaperone; binds unfolded polypeptides in vitro, and has a weak ATPase activity. This chain is Thermosome subunit (ths), found in Pyrococcus horikoshii (strain ATCC 700860 / DSM 12428 / JCM 9974 / NBRC 100139 / OT-3).